The following is a 577-amino-acid chain: Chaperonin CPN60-1, mitochondrial (577 aa).

The N-terminal 34 residues, Met-1–Tyr-34, are a transit peptide targeting the mitochondrion.

It belongs to the chaperonin (HSP60) family.

Its subcellular location is the mitochondrion. In terms of biological role, implicated in mitochondrial protein import and macromolecular assembly. May facilitate the correct folding of imported proteins. May also prevent misfolding and promote the refolding and proper assembly of unfolded polypeptides generated under stress conditions in the mitochondrial matrix. This chain is Chaperonin CPN60-1, mitochondrial (CPN60I), found in Zea mays (Maize).